We begin with the raw amino-acid sequence, 338 residues long: Mitochondrial genome maintenance exonuclease 1 (338 aa).

The N-terminal 64 residues, 1-64 (MKLPLTFCRL…RSVLSRGPAQ (64 aa)), are a transit peptide targeting the mitochondrion. Residues aspartate 235, aspartate 248, and lysine 250 contribute to the active site.

This sequence belongs to the MGME1 family.

It localises to the mitochondrion. Its function is as follows. Metal-dependent single-stranded DNA (ssDNA) exonuclease involved in mitochondrial genome maintenance. Has preference for 5'-3' exonuclease activity but is also capable of endonuclease activity on linear substrates. Necessary for maintenance of proper 7S DNA levels. Probably involved in mitochondrial DNA (mtDNA) repair, possibly via the processing of displaced DNA containing Okazaki fragments during RNA-primed DNA synthesis on the lagging strand or via processing of DNA flaps during long-patch base excision repair. Specifically binds 5-hydroxymethylcytosine (5hmC)-containing DNA in stem cells. The sequence is that of Mitochondrial genome maintenance exonuclease 1 (Mgme1) from Mus musculus (Mouse).